Here is a 199-residue protein sequence, read N- to C-terminus: 7-methyl-GTP pyrophosphatase (199 aa).

The active-site Proton acceptor is the Asp76.

The protein belongs to the Maf family. YceF subfamily. The cofactor is a divalent metal cation.

The protein resides in the cytoplasm. It carries out the reaction N(7)-methyl-GTP + H2O = N(7)-methyl-GMP + diphosphate + H(+). Nucleoside triphosphate pyrophosphatase that hydrolyzes 7-methyl-GTP (m(7)GTP). May have a dual role in cell division arrest and in preventing the incorporation of modified nucleotides into cellular nucleic acids. The chain is 7-methyl-GTP pyrophosphatase from Hahella chejuensis (strain KCTC 2396).